The chain runs to 508 residues: Sugar transport protein 12 (508 aa).

Residues 1–22 (MPSVGIVIGDGKKEYPGKLTLY) are Cytoplasmic-facing. 12 helical membrane-spanning segments follow: residues 23 to 43 (VTVT…DIGI), 80 to 100 (VSLT…SLVA), 118 to 138 (VLFC…MLIV), 141 to 161 (LLLG…LSEM), 172 to 192 (IGFQ…NFFF), 201 to 221 (LSLG…LILP), 294 to 314 (LTGI…IGFG), 317 to 337 (AALI…VVSI), 347 to 367 (FLFL…AAAI), 383 to 403 (WYAI…AWSW), 426 to 446 (ITVS…LMML), and 451 to 471 (FGLF…VYLF). The Cytoplasmic segment spans residues 472 to 508 (LPETRGVPIEEMNRVWRSHWYWSKFVDAEKNLTKVVI).

Belongs to the major facilitator superfamily. Sugar transporter (TC 2.A.1.1) family.

It is found in the membrane. Mediates an active uptake of hexoses, probably by sugar/hydrogen symport. This chain is Sugar transport protein 12 (STP12), found in Arabidopsis thaliana (Mouse-ear cress).